Here is a 339-residue protein sequence, read N- to C-terminus: Deoxyguanosinetriphosphate triphosphohydrolase-like protein (339 aa).

The 112-residue stretch at 75–186 (RLTHTLEVAQ…VQISDKIAYI (112 aa)) folds into the HD domain.

This sequence belongs to the dGTPase family. Type 2 subfamily.

The chain is Deoxyguanosinetriphosphate triphosphohydrolase-like protein from Caldanaerobacter subterraneus subsp. tengcongensis (strain DSM 15242 / JCM 11007 / NBRC 100824 / MB4) (Thermoanaerobacter tengcongensis).